Here is a 338-residue protein sequence, read N- to C-terminus: uncharacterized protein (338 aa).

The signal sequence occupies residues 1–29; it reads MIKQLYKNITICSLTISTALTVFPATSYA.

It belongs to the aerolysin family.

This is an uncharacterized protein from Staphylococcus aureus (strain bovine RF122 / ET3-1).